The sequence spans 304 residues: MTQKIKCALIGPGNIGTDLLAKLKRSPFLEPVWMVGIDPESDGLRRAAEMGLKVTAEGVDGLLPHVLADGVQIAFDATSAYVHAENSRKLNALGVMMIDLTPAAIGPFCVPPVNLKELVGRKEMNVNMVTCGGQATIPMVAAISRVQKVKYGEIVATISSKSAGPGTRKNIDEFTRTTSGAIEKVGGAEKGKAIIIINPAEPPLMMRDTVHCLTEGTPDQAKITESIHAMIKEVQKYVPGYRLVNGPVFDGNRVSVFLEVEGLGDYLPKYAGNLDIMTAAAARTAEMFAEEIISGVLKLEPVVA.

Catalysis depends on cysteine 131, which acts as the Acyl-thioester intermediate. NAD(+) contacts are provided by residues 162–170 and asparagine 273; that span reads SAGPGTRKN.

This sequence belongs to the acetaldehyde dehydrogenase family.

It carries out the reaction acetaldehyde + NAD(+) + CoA = acetyl-CoA + NADH + H(+). The polypeptide is Acetaldehyde dehydrogenase 1 (Dechloromonas aromatica (strain RCB)).